Consider the following 231-residue polypeptide: Probable tetraspanin tspE (231 aa).

Over 1–21 (MTFVDNFEFNQNTPRLVRGPF) the chain is Cytoplasmic. A helical transmembrane segment spans residues 22–42 (IILNSIIFSLSFILLCSTGII). The Extracellular portion of the chain corresponds to 43 to 58 (IYYLNEYYLVKDLTIP). Residues 59–79 (LGSFILSAYMVITTIVGGIAI) traverse the membrane as a helical segment. The Cytoplasmic portion of the chain corresponds to 80-83 (WKKK). A helical membrane pass occupies residues 84 to 104 (LGLHLTFMVFLVVLIVCLVGV). The Extracellular segment spans residues 105–195 (SAKMIVDSGN…VESILKYLGY (91 aa)). Residues 196-216 (YGIVLSVIELILLILSGFFLL) traverse the membrane as a helical segment. Topologically, residues 217 to 231 (KTNKNVKSKSFILQD) are cytoplasmic.

This sequence belongs to the tetraspanin (TM4SF) family.

The protein resides in the membrane. This is Probable tetraspanin tspE (tspE) from Dictyostelium discoideum (Social amoeba).